A 61-amino-acid polypeptide reads, in one-letter code: Small ribosomal subunit protein uS14 (61 aa).

The Zn(2+) site is built by C24, C27, C40, and C43.

The protein belongs to the universal ribosomal protein uS14 family. Zinc-binding uS14 subfamily. As to quaternary structure, part of the 30S ribosomal subunit. Contacts proteins S3 and S10. It depends on Zn(2+) as a cofactor.

Its function is as follows. Binds 16S rRNA, required for the assembly of 30S particles and may also be responsible for determining the conformation of the 16S rRNA at the A site. This is Small ribosomal subunit protein uS14 from Geobacter metallireducens (strain ATCC 53774 / DSM 7210 / GS-15).